A 101-amino-acid polypeptide reads, in one-letter code: UPF0473 protein MGAS10750_Spy1887 (101 aa).

Belongs to the UPF0473 family.

In Streptococcus pyogenes serotype M4 (strain MGAS10750), this protein is UPF0473 protein MGAS10750_Spy1887.